Consider the following 122-residue polypeptide: Large ribosomal subunit protein bL12 (122 aa).

It belongs to the bacterial ribosomal protein bL12 family. As to quaternary structure, homodimer. Part of the ribosomal stalk of the 50S ribosomal subunit. Forms a multimeric L10(L12)X complex, where L10 forms an elongated spine to which 2 to 4 L12 dimers bind in a sequential fashion. Binds GTP-bound translation factors.

Functionally, forms part of the ribosomal stalk which helps the ribosome interact with GTP-bound translation factors. Is thus essential for accurate translation. This Neisseria lactamica protein is Large ribosomal subunit protein bL12.